The primary structure comprises 668 residues: WD repeat-containing protein 48 homolog (668 aa).

WD repeat units follow at residues 26-65 (QHRNGVNALQLDANNGKLYSAGRDAIIRVWNTRTDSSEKY), 71-110 (HHNDWVNDIVLCCNGRNLISASCDTTVKVWNAQKGFCMST), 113-152 (THRDYVQALAYAKDREQVASAGLDKAIFLWDVNTLTALTA), 164-203 (GSKDSIYSLAMNPSGTVIVSGSTENILRIWDPRTCMRRMK), 206-245 (GHTENVRCLVVSPDGNQVVSGSSDGTIKVWNLGQQRCVQT), 248-287 (VHKEGVWSLLMSENFQYIISGSRDRNIIVTEMRNPSNKTL), 290-329 (EEQAPVLSLGYNIDKTGVWATTWNSDIRCWKLPMYDRCTL), and 350-389 (KGGAAIKECAVLNDKRYIITKDSQDQVVVYDVLRVVKKEQ). Residues 592 to 616 (ETTPSGGNANNSLQNSQSDANSEGS) form a disordered region.

The protein belongs to the WD repeat WDR48 family. In terms of assembly, catalytic component of the Usp12-46 deubiquitylase complex consisting of Usp12-46, Wdr20 and Uaf1; regulatory subunit that, together wtih Wdr20, stabilizes Usp12-46. The Usp12-46 deubiquitylase complex associates with arr/arrow; the interaction leads to deubiquitination and stabilization of arr/arrow.

In terms of biological role, regulatory component of the Usp12-46 deubiquitylase complex. activates deubiquitination by increasing the catalytic turnover without increasing the affinity of deubiquitinating enzymes for the substrate. The complex deubiquitylates the wg/wingless-signaling receptor arr/arrow, which stabilizes the receptor and increases its concentration at the cell surface; this enhances the sensitivity of cells to wg/wingless-signal stimulation. This increases the amplitude and spatial range of the signaling response to the wg/wingless morphogen gradient, facilitating the precise concentration-dependent regulation of its target genes. Together with Wdr20 and Usp12-46 required for wg/wingless-mediated signaling in the wing imaginal disc and for wg/wingless-dependent regulation of intestinal stem cell proliferation. This is WD repeat-containing protein 48 homolog from Drosophila melanogaster (Fruit fly).